We begin with the raw amino-acid sequence, 314 residues long: Aspartate carbamoyltransferase catalytic subunit (314 aa).

The carbamoyl phosphate site is built by R55 and T56. An L-aspartate-binding site is contributed by K83. Carbamoyl phosphate is bound by residues R105, H139, and Q142. The L-aspartate site is built by R172 and R226. Positions 267 and 268 each coordinate carbamoyl phosphate.

It belongs to the aspartate/ornithine carbamoyltransferase superfamily. ATCase family. As to quaternary structure, heterododecamer (2C3:3R2) of six catalytic PyrB chains organized as two trimers (C3), and six regulatory PyrI chains organized as three dimers (R2).

The enzyme catalyses carbamoyl phosphate + L-aspartate = N-carbamoyl-L-aspartate + phosphate + H(+). Its pathway is pyrimidine metabolism; UMP biosynthesis via de novo pathway; (S)-dihydroorotate from bicarbonate: step 2/3. Its function is as follows. Catalyzes the condensation of carbamoyl phosphate and aspartate to form carbamoyl aspartate and inorganic phosphate, the committed step in the de novo pyrimidine nucleotide biosynthesis pathway. This Rhodococcus erythropolis (strain PR4 / NBRC 100887) protein is Aspartate carbamoyltransferase catalytic subunit.